Consider the following 346-residue polypeptide: Methylthioribose-1-phosphate isomerase (346 aa).

Residues 46–48, Arg89, and Gln196 each bind substrate; that span reads RGA. Asp237 functions as the Proton donor in the catalytic mechanism. 247–248 contacts substrate; that stretch reads NK.

Belongs to the eIF-2B alpha/beta/delta subunits family. MtnA subfamily.

The enzyme catalyses 5-(methylsulfanyl)-alpha-D-ribose 1-phosphate = 5-(methylsulfanyl)-D-ribulose 1-phosphate. It functions in the pathway amino-acid biosynthesis; L-methionine biosynthesis via salvage pathway; L-methionine from S-methyl-5-thio-alpha-D-ribose 1-phosphate: step 1/6. Its function is as follows. Catalyzes the interconversion of methylthioribose-1-phosphate (MTR-1-P) into methylthioribulose-1-phosphate (MTRu-1-P). The protein is Methylthioribose-1-phosphate isomerase of Citrifermentans bemidjiense (strain ATCC BAA-1014 / DSM 16622 / JCM 12645 / Bem) (Geobacter bemidjiensis).